A 571-amino-acid chain; its full sequence is Calcium-dependent protein kinase 16 (571 aa).

The tract at residues 1–74 is disordered; that stretch reads MGLCFSSAAK…TRHTPPHGKV (74 aa). Gly2 carries the N-myristoyl glycine lipid modification. Cys4 is lipidated: S-palmitoyl cysteine. Basic residues predominate over residues 63–72; sequence TPTRHTPPHG. One can recognise a Protein kinase domain in the interval 108–368; the sequence is YTIGKLLGHG…AAQALSHPWV (261 aa). Residues 114-122 and Lys137 contribute to the ATP site; that span reads LGHGQFGYT. Catalysis depends on Asp234, which acts as the Proton acceptor. Position 274 is a phosphoserine (Ser274). The autoinhibitory domain stretch occupies residues 374 to 404; it reads ASEIPIDISVLNNMRQFVKFSRLKQFALRAL. 4 consecutive EF-hand domains span residues 411–446, 448–483, 490–525, and 528–555; these read EELA…DHPW, LKDA…VNQL, KWQQ…KGSI, and LLEE…ASIK. Positions 424, 426, 428, 435, 461, 463, 465, 472, 503, 505, 507, 514, 533, 535, 537, and 539 each coordinate Ca(2+). Ser541 carries the phosphoserine modification. Glu544 contributes to the Ca(2+) binding site.

Belongs to the protein kinase superfamily. Ser/Thr protein kinase family. CDPK subfamily.

It is found in the cell membrane. It localises to the nucleus. The enzyme catalyses L-seryl-[protein] + ATP = O-phospho-L-seryl-[protein] + ADP + H(+). It catalyses the reaction L-threonyl-[protein] + ATP = O-phospho-L-threonyl-[protein] + ADP + H(+). Activated by calcium. Autophosphorylation may play an important role in the regulation of the kinase activity. In terms of biological role, may play a role in signal transduction pathways that involve calcium as a second messenger. The sequence is that of Calcium-dependent protein kinase 16 (CPK16) from Arabidopsis thaliana (Mouse-ear cress).